The primary structure comprises 200 residues: Probable GTP-binding protein EngB (200 aa).

The EngB-type G domain maps to 22 to 195; sequence GKDEIAFVGR…INNICSGINY (174 aa). GTP contacts are provided by residues 30 to 37, 57 to 61, 75 to 78, 142 to 145, and 174 to 176; these read GRSNVGKS, GKTRL, DLPG, TKSD, and FSS. Ser37 and Thr59 together coordinate Mg(2+).

Belongs to the TRAFAC class TrmE-Era-EngA-EngB-Septin-like GTPase superfamily. EngB GTPase family. Requires Mg(2+) as cofactor.

Its function is as follows. Necessary for normal cell division and for the maintenance of normal septation. This chain is Probable GTP-binding protein EngB, found in Clostridium acetobutylicum (strain ATCC 824 / DSM 792 / JCM 1419 / IAM 19013 / LMG 5710 / NBRC 13948 / NRRL B-527 / VKM B-1787 / 2291 / W).